The chain runs to 130 residues: MSMQDPISDMLTRVRNGQAANKVAVKMPSSKLKVAIAALLKAEGYIVDFAVEGEAKPELEVTLKYFQAKPVIEQLKRVSRPGLRVYKKKDQLPSVMGGLGIAIVSTSKGLMSDRAARKAGLGGEIICYVA.

The protein belongs to the universal ribosomal protein uS8 family. As to quaternary structure, part of the 30S ribosomal subunit. Contacts proteins S5 and S12.

One of the primary rRNA binding proteins, it binds directly to 16S rRNA central domain where it helps coordinate assembly of the platform of the 30S subunit. The sequence is that of Small ribosomal subunit protein uS8 from Vibrio campbellii (strain ATCC BAA-1116).